Consider the following 505-residue polypeptide: L-carnitine/gamma-butyrobetaine antiporter (505 aa).

Transmembrane regions (helical) follow at residues 10–30 (IEPKVFFPPLIIVGILCWLTV), 51–71 (WGWAFEWYMIVMLFGWFWLVF), 92–112 (IFMMFASCTSAAVLFWGSIEI), 143–163 (GPLPWATYSFLSVAFAYFFFV), 195–215 (FYLVALIFAMGTSLGLATPLV), 231–251 (LDAIIITCWIILNAICVACGL), 263–283 (SYLSFLMLGWVFIVSGASFIM), 316–336 (WTVFYWAWWVIYAIQMSIFLA), 347–367 (LCFGMVMGLTASTWILWTVLG), 403–423 (LSTATMWGFFILCFIATVTLI), 446–466 (LLVRIGWSVLVGIIGIVLLAL), and 475–495 (AIIAGGCPLFFVNIMVTLSFI).

This sequence belongs to the BCCT transporter (TC 2.A.15) family. CaiT subfamily. In terms of assembly, homotrimer.

It localises to the cell inner membrane. It carries out the reaction 4-(trimethylamino)butanoate(in) + (R)-carnitine(out) = 4-(trimethylamino)butanoate(out) + (R)-carnitine(in). It functions in the pathway amine and polyamine metabolism; carnitine metabolism. Functionally, catalyzes the exchange of L-carnitine for gamma-butyrobetaine. This chain is L-carnitine/gamma-butyrobetaine antiporter, found in Salmonella gallinarum (strain 287/91 / NCTC 13346).